The sequence spans 59 residues: Large ribosomal subunit protein uL30 (59 aa).

It belongs to the universal ribosomal protein uL30 family. As to quaternary structure, part of the 50S ribosomal subunit.

The chain is Large ribosomal subunit protein uL30 from Clostridium botulinum (strain ATCC 19397 / Type A).